A 66-amino-acid polypeptide reads, in one-letter code: Prokaryotic ubiquitin-like protein UBact (66 aa).

Positions 1-66 (MNMRYTLMPE…AERYRQRTGE (66 aa)) are disordered. The span at 30–66 (GGPRRPETGSPDKDNLLKRMRKVDPKQAERYRQRTGE) shows a compositional bias: basic and acidic residues. Glutamate 66 participates in a covalent cross-link: Isoglutamyl lysine isopeptide (Glu-Lys) (interchain with K-? in acceptor proteins).

The protein belongs to the ubiquitin-like protein UBact family.

Its function is as follows. May function as a protein modifier covalently attached to lysine residues of substrate proteins. This may serve to target the modified proteins for degradation by proteasomes. The protein is Prokaryotic ubiquitin-like protein UBact of Nitrospira moscoviensis.